The chain runs to 40 residues: Large ribosomal subunit protein bL36B (40 aa).

Belongs to the bacterial ribosomal protein bL36 family.

This Streptomyces coelicolor (strain ATCC BAA-471 / A3(2) / M145) protein is Large ribosomal subunit protein bL36B.